A 139-amino-acid polypeptide reads, in one-letter code: GPI-anchored protein 53 (139 aa).

The N-terminal stretch at 1–17 (MKFQLLTLVSIATTTLA) is a signal peptide. 2 stretches are compositionally biased toward low complexity: residues 57–69 (TITSSSSTTTTTT) and 77–101 (TSTTSASSTTTTSTKSNSTSPSSSS). Positions 57 to 115 (TITSSSSTTTTTTAKKDKKTTSTTSASSTTTTSTKSNSTSPSSSSSKKHKSETASITKT) are disordered. Residue Asn-93 is glycosylated (N-linked (GlcNAc...) asparagine). A lipid anchor (GPI-anchor amidated glycine) is attached at Gly-116. Positions 117–139 (GADSVAAAAAVGGPILAALALLL) are cleaved as a propeptide — removed in mature form.

The protein resides in the cell membrane. The polypeptide is GPI-anchored protein 53 (PGA53) (Candida albicans (strain SC5314 / ATCC MYA-2876) (Yeast)).